The primary structure comprises 195 residues: dITP/XTP pyrophosphatase (195 aa).

8–13 (TNNQGK) is a binding site for substrate. Mg(2+)-binding residues include Glu39 and Asp68. Catalysis depends on Asp68, which acts as the Proton acceptor. Residues Ser69, 149 to 152 (FGYD), Lys172, and 177 to 178 (HR) contribute to the substrate site.

This sequence belongs to the HAM1 NTPase family. In terms of assembly, homodimer. Requires Mg(2+) as cofactor.

It carries out the reaction XTP + H2O = XMP + diphosphate + H(+). The enzyme catalyses dITP + H2O = dIMP + diphosphate + H(+). It catalyses the reaction ITP + H2O = IMP + diphosphate + H(+). Functionally, pyrophosphatase that catalyzes the hydrolysis of nucleoside triphosphates to their monophosphate derivatives, with a high preference for the non-canonical purine nucleotides XTP (xanthosine triphosphate), dITP (deoxyinosine triphosphate) and ITP. Seems to function as a house-cleaning enzyme that removes non-canonical purine nucleotides from the nucleotide pool, thus preventing their incorporation into DNA/RNA and avoiding chromosomal lesions. The polypeptide is dITP/XTP pyrophosphatase (Staphylococcus epidermidis (strain ATCC 35984 / DSM 28319 / BCRC 17069 / CCUG 31568 / BM 3577 / RP62A)).